The sequence spans 618 residues: 1-deoxy-D-xylulose-5-phosphate synthase (618 aa).

Thiamine diphosphate is bound by residues histidine 70 and 111–113 (GHS). Aspartate 142 serves as a coordination point for Mg(2+). Residues 143–144 (GS), asparagine 171, tyrosine 278, and glutamate 360 contribute to the thiamine diphosphate site. Asparagine 171 provides a ligand contact to Mg(2+).

The protein belongs to the transketolase family. DXPS subfamily. Homodimer. It depends on Mg(2+) as a cofactor. Thiamine diphosphate is required as a cofactor.

It carries out the reaction D-glyceraldehyde 3-phosphate + pyruvate + H(+) = 1-deoxy-D-xylulose 5-phosphate + CO2. Its pathway is metabolic intermediate biosynthesis; 1-deoxy-D-xylulose 5-phosphate biosynthesis; 1-deoxy-D-xylulose 5-phosphate from D-glyceraldehyde 3-phosphate and pyruvate: step 1/1. Functionally, catalyzes the acyloin condensation reaction between C atoms 2 and 3 of pyruvate and glyceraldehyde 3-phosphate to yield 1-deoxy-D-xylulose-5-phosphate (DXP). This is 1-deoxy-D-xylulose-5-phosphate synthase from Helicobacter pylori (strain ATCC 700392 / 26695) (Campylobacter pylori).